A 62-amino-acid polypeptide reads, in one-letter code: Large ribosomal subunit protein eL24 (62 aa).

Positions 7, 10, 33, and 37 each coordinate Zn(2+). A C4-type zinc finger spans residues 7 to 37 (CSFCGKDILPGTGLMYVRNDGSLLWFCSSKC).

The protein belongs to the eukaryotic ribosomal protein eL24 family. Part of the 50S ribosomal subunit. Forms a cluster with proteins L3 and L14. Requires Zn(2+) as cofactor.

Functionally, binds to the 23S rRNA. The sequence is that of Large ribosomal subunit protein eL24 from Sulfolobus acidocaldarius (strain ATCC 33909 / DSM 639 / JCM 8929 / NBRC 15157 / NCIMB 11770).